The primary structure comprises 1096 residues: Lysine-specific demethylase 4B (1096 aa).

In terms of domain architecture, JmjN spans 15 to 57; it reads IMTFRPTMEEFKDFNKYVAYIESQGAHRAGLAKIIPPKEWKPR. 2-oxoglutarate is bound at residue Tyr-133. The JmjC domain maps to 146-309; that stretch reads VAQWNIGSLR…YGKVATQCTC (164 aa). Fe cation is bound by residues His-189 and Glu-191. Asn-199 and Lys-207 together coordinate 2-oxoglutarate. Zn(2+)-binding residues include Cys-235 and His-241. Residue Lys-242 coordinates 2-oxoglutarate. His-277 lines the Fe cation pocket. 2 residues coordinate Zn(2+): Cys-307 and Cys-309. Basic residues predominate over residues 369–382; that stretch reads LLRRSHRKRSQPKK. 2 disordered regions span residues 369 to 478 and 557 to 649; these read LLRR…SEEA and KGPT…VSDP. Over residues 391 to 406 the composition is skewed to low complexity; that stretch reads PGEGTAGAALLEEAGG. Over residues 413–425 the composition is skewed to acidic residues; it reads GPEVDPEEEEEEP. Over residues 430-443 the composition is skewed to basic and acidic residues; sequence HGREAEGAEEDGRG. Positions 444 to 458 are enriched in basic residues; it reads KLRPTKAKSERKKKS. Ser-566 carries the post-translational modification Phosphoserine. Residue Lys-602 is modified to N6-acetyllysine. A compositionally biased stretch (acidic residues) spans 632–648; it reads SSDEEASPFSGEEDVSD. The PHD-type 1 zinc finger occupies 731–789; that stretch reads MCFTSGGENTEPLPANSYIGDDGTSPLIACGKCCLQVHASCYGIRPELVNEGWTCSRCA. The C2HC pre-PHD-type zinc finger occupies 794 to 827; sequence TAECCLCNLRGGALQMTTDRRWIHVICAIAVPEA. Residues 850-907 form a PHD-type 2 zinc finger; sequence LKCVYCRKRMKKVSGACIQCSYEHCSTSFHVTCAHAAGVLMEPDDWPYVVSITCLKHK. 2 Tudor domains span residues 917–974 and 975–1031; these read RAVS…CVQL and GPPS…EELP. Positions 1037–1073 are disordered; the sequence is RLSLSTGAPQEPAFSGEEAKAAKRPRVGTPLATEDSG. Thr-1065 is modified (phosphothreonine).

Belongs to the JHDM3 histone demethylase family. It depends on Fe(2+) as a cofactor.

It localises to the nucleus. It carries out the reaction N(6),N(6),N(6)-trimethyl-L-lysyl(9)-[histone H3] + 2 2-oxoglutarate + 2 O2 = N(6)-methyl-L-lysyl(9)-[histone H3] + 2 formaldehyde + 2 succinate + 2 CO2. Its function is as follows. Histone demethylase that specifically demethylates 'Lys-9' of histone H3, thereby playing a role in histone code. Does not demethylate histone H3 'Lys-4', H3 'Lys-27', H3 'Lys-36' nor H4 'Lys-20'. Only able to demethylate trimethylated H3 'Lys-9', with a weaker activity than KDM4A, KDM4C and KDM4D. Demethylation of Lys residue generates formaldehyde and succinate. Plays a critical role in the development of the central nervous system (CNS). The chain is Lysine-specific demethylase 4B (KDM4B) from Homo sapiens (Human).